Reading from the N-terminus, the 659-residue chain is Biosynthetic arginine decarboxylase 2 (659 aa).

Position 119 is an N6-(pyridoxal phosphate)lysine (lysine 119). 311–321 (LNVGGGLAVDY) contacts substrate.

Belongs to the Orn/Lys/Arg decarboxylase class-II family. SpeA subfamily. Mg(2+) is required as a cofactor. It depends on pyridoxal 5'-phosphate as a cofactor.

It carries out the reaction L-arginine + H(+) = agmatine + CO2. In terms of biological role, catalyzes the biosynthesis of agmatine from arginine. This chain is Biosynthetic arginine decarboxylase 2 (speA2), found in Synechocystis sp. (strain ATCC 27184 / PCC 6803 / Kazusa).